Here is a 426-residue protein sequence, read N- to C-terminus: Branched-chain amino acid permease BrnQ (426 aa).

12 helical membrane-spanning segments follow: residues 11-31, 41-61, 76-96, 111-131, 140-160, 186-206, 219-239, 268-288, 296-316, 324-344, 358-378, and 390-410; these read LMLF…MLGL, ILGF…AVVL, IFGL…YALP, NALY…ALSW, LGKW…VLSV, GYMT…ISAF, VVSA…LGSI, IMFV…LISA, LLPG…SFGV, VLAV…TLVF, TYLF…IPAL, and MSLG…AIDW.

It belongs to the branched chain amino acid transporter family.

The protein localises to the cell membrane. Its function is as follows. Branched chain amino acid transport system, which transports isoleucine. This chain is Branched-chain amino acid permease BrnQ, found in Corynebacterium glutamicum (strain ATCC 13032 / DSM 20300 / JCM 1318 / BCRC 11384 / CCUG 27702 / LMG 3730 / NBRC 12168 / NCIMB 10025 / NRRL B-2784 / 534).